We begin with the raw amino-acid sequence, 182 residues long: MFLSASMASSSLHVAIFSLIFLFSLAAANEVTVGGKSGDWKIPPSSSYSFTEWAQKARFKVGDFIVFRYESGKDSVLEVTKEAYNSCNTTNPLANYTDGETKVKLDRSGPFYFISGANGHCEKGQKLSLVVISPRHSVISPAPSPVEFEDGPALAPAPISGSVRLGGCYVVLGLVLGLCAWF.

Positions 1–28 (MFLSASMASSSLHVAIFSLIFLFSLAAA) are cleaved as a signal peptide. The 105-residue stretch at 29–133 (NEVTVGGKSG…GQKLSLVVIS (105 aa)) folds into the Phytocyanin domain. Cys-87 and Cys-121 form a disulfide bridge. Residues Asn-88 and Asn-95 are each glycosylated (N-linked (GlcNAc...) asparagine). The GPI-anchor amidated serine moiety is linked to residue Ser-160. The propeptide at 161 to 182 (GSVRLGGCYVVLGLVLGLCAWF) is removed in mature form.

Belongs to the early nodulin-like (ENODL) family. Interacts strongly and specifically with the extracellular domain of FERONIA at the synergid cell surface. As to expression, mostly expressed in seedlings and flowers, and, to a lower extent, in roots, stems and seeds, but barely in leaves.

It localises to the cell membrane. May act as a carbohydrate transporter. Required, together with ENODL11, ENODL12, ENODL13, ENODL14 and ENODL15, for male-female communication and pollen tube reception and burst at the synergid cell surface of the female gametophyte. This Arabidopsis thaliana (Mouse-ear cress) protein is Early nodulin-like protein 14.